Consider the following 323-residue polypeptide: Apolipoprotein E (323 aa).

A signal peptide spans 1–18 (MKVLWAALVVTLLAGCWA). Tandem repeats lie at residues 86-107 (ALMD…EQLG), 108-129 (PMTS…ARLR), 130-151 (SDME…AMLG), 152-173 (QSSE…KRVL), 174-195 (RDAE…EGAE), 196-217 (RSVS…ERNA), 218-239 (KVGA…QQLR), and 240-261 (GQLE…EQIQ). Residues 86–261 (ALMDETMKEV…HLEEMREQIQ (176 aa)) are 8 X 22 AA approximate tandem repeats. Met149 bears the Methionine sulfoxide mark. Phosphoserine is present on Ser153. Residues 164-174 (HMRKLRKRVLR) are LDL and other lipoprotein receptors binding. 168 to 171 (LRKR) contributes to the heparin binding site. Positions 216–296 (NAKVGALATQ…SWFEPLLEDM (81 aa)) are lipid-binding and lipoprotein association. 235–242 (GQQLRGQL) contacts heparin. The segment at 272–323 (DQIRQKAEAFQARLKSWFEPLLEDMQRQWDGLVEKVQAAVATIPTSKPVEEP) is homooligomerization. A specificity for association with VLDL region spans residues 284 to 296 (RLKSWFEPLLEDM).

It belongs to the apolipoprotein A1/A4/E family. As to quaternary structure, homotetramer. May interact with ABCA1; functionally associated with ABCA1 in the biogenesis of HDLs. May interact with APP/A4 amyloid-beta peptide; the interaction is extremely stable in vitro but its physiological significance is unclear. May interact with MAPT. May interact with MAP2. In the cerebrospinal fluid, interacts with secreted SORL1. Interacts with PMEL; this allows the loading of PMEL luminal fragment on ILVs to induce fibril nucleation. In terms of processing, APOE exists as multiple glycosylated and sialylated glycoforms within cells and in plasma. The extent of glycosylation and sialylation are tissue and context specific. Glycated in plasma VLDL. Post-translationally, phosphorylated by FAM20C in the extracellular medium.

The protein localises to the secreted. It localises to the extracellular space. The protein resides in the extracellular matrix. Its subcellular location is the extracellular vesicle. It is found in the endosome. The protein localises to the multivesicular body. Its function is as follows. APOE is an apolipoprotein, a protein associating with lipid particles, that mainly functions in lipoprotein-mediated lipid transport between organs via the plasma and interstitial fluids. APOE is a core component of plasma lipoproteins and is involved in their production, conversion and clearance. Apolipoproteins are amphipathic molecules that interact both with lipids of the lipoprotein particle core and the aqueous environment of the plasma. As such, APOE associates with chylomicrons, chylomicron remnants, very low density lipoproteins (VLDL) and intermediate density lipoproteins (IDL) but shows a preferential binding to high-density lipoproteins (HDL). It also binds a wide range of cellular receptors including the LDL receptor/LDLR and the very low-density lipoprotein receptor/VLDLR that mediate the cellular uptake of the APOE-containing lipoprotein particles. Finally, APOE also has a heparin-binding activity and binds heparan-sulfate proteoglycans on the surface of cells, a property that supports the capture and the receptor-mediated uptake of APOE-containing lipoproteins by cells. The polypeptide is Apolipoprotein E (APOE) (Canis lupus familiaris (Dog)).